Reading from the N-terminus, the 170-residue chain is CCHC-type zinc finger nucleic acid binding protein (170 aa).

Ser-2 carries the post-translational modification N-acetylserine. The segment at 4 to 21 adopts a CCHC-type 1 zinc-finger fold; it reads NECFKCGRSGHWARECPT. Position 8 is an N6-acetyllysine (Lys-8). Residues Arg-25 and Arg-27 each carry the omega-N-methylarginine; by PRMT1 modification. The segment at 25–33 is RNA-binding Arg/Gly-rich region (RGG-box); that stretch reads RGRGMRSRG. Ser-42 is subject to Phosphoserine. 6 CCHC-type zinc fingers span residues 45–62, 65–82, 89–106, 110–127, 128–145, and 149–166; these read DICY…DCDL, DACY…DCKE, QCCY…DCDH, QKCY…DCTK, VKCY…NCSK, and VNCY…ECTI. Arg-72 carries the post-translational modification Omega-N-methylarginine.

Associates with the 40S ribosomal subunit, the 80S ribosome and with polysomes. Post-translationally, arginine methylation by PRMT1 in the Arg/Gly-rich region impedes RNA binding.

Its subcellular location is the nucleus. The protein localises to the cytoplasm. It is found in the endoplasmic reticulum. Single-stranded DNA-binding protein that preferentially binds to the sterol regulatory element (SRE) sequence 5'-GTGCGGTG-3', and thereby mediates transcriptional repression. Has a role as transactivator of the Myc promoter. Binds single-stranded RNA in a sequence-specific manner. Binds G-rich elements in target mRNA coding sequences. Prevents G-quadruplex structure formation in vitro, suggesting a role in supporting translation by resolving stable structures on mRNAs. This is CCHC-type zinc finger nucleic acid binding protein (CNBP) from Bos taurus (Bovine).